Reading from the N-terminus, the 178-residue chain is ATP synthase subunit delta (178 aa).

It belongs to the ATPase delta chain family. As to quaternary structure, F-type ATPases have 2 components, F(1) - the catalytic core - and F(0) - the membrane proton channel. F(1) has five subunits: alpha(3), beta(3), gamma(1), delta(1), epsilon(1). F(0) has three main subunits: a(1), b(2) and c(10-14). The alpha and beta chains form an alternating ring which encloses part of the gamma chain. F(1) is attached to F(0) by a central stalk formed by the gamma and epsilon chains, while a peripheral stalk is formed by the delta and b chains.

Its subcellular location is the cell inner membrane. F(1)F(0) ATP synthase produces ATP from ADP in the presence of a proton or sodium gradient. F-type ATPases consist of two structural domains, F(1) containing the extramembraneous catalytic core and F(0) containing the membrane proton channel, linked together by a central stalk and a peripheral stalk. During catalysis, ATP synthesis in the catalytic domain of F(1) is coupled via a rotary mechanism of the central stalk subunits to proton translocation. In terms of biological role, this protein is part of the stalk that links CF(0) to CF(1). It either transmits conformational changes from CF(0) to CF(1) or is implicated in proton conduction. The protein is ATP synthase subunit delta of Azotobacter vinelandii (strain DJ / ATCC BAA-1303).